We begin with the raw amino-acid sequence, 222 residues long: MTILRLNGGKILNEKVHEIGVIAMGSYLENHGSALPIDTDIKIASYVSLMACIKTGAKFLGTVIPSTEYSYVKHGIHNKVSDIVEYLTFLLTWAKRIGIKKVIIVNCHGGNILAEKEIKELENLINIKIKFLSFPLTHAATEELSIGYVIGIANKEKMKEHKPENYAEIGMVGLREAREKNKEIDEEAKRVEKEGVKIDEELGKKLLDEFINKVVNEITNFL.

Glutamate 29, histidine 31, aspartate 40, and histidine 108 together coordinate Fe cation.

Belongs to the creatininase superfamily. FAPy deformylase family. In terms of assembly, homodimer. Fe(2+) serves as cofactor. Requires Zn(2+) as cofactor.

The catalysed reaction is 2-amino-5-formylamino-6-(5-phospho-D-ribosylamino)pyrimidin-4(3H)-one + H2O = 2,5-diamino-6-(1-D-ribosylamino)pyrimidin-4(3H)-one 5'-phosphate + formate + H(+). It functions in the pathway cofactor biosynthesis; coenzyme F420 biosynthesis. It participates in cofactor biosynthesis; riboflavin biosynthesis. In terms of biological role, catalyzes the hydrolysis of the formamide of 2-amino-5-formylamino-6-ribosylamino-4(3H)-pyrimidinone 5'-monophosphate (FAPy) to form 2,5-diamino-6-ribosylamino-4(3H)-pyrimidinone 5'-phosphate (APy). This is 2-amino-5-formylamino-6-ribosylaminopyrimidin-4(3H)-one 5'-monophosphate deformylase from Methanocaldococcus infernus (strain DSM 11812 / JCM 15783 / ME).